We begin with the raw amino-acid sequence, 498 residues long: Death-associated inhibitor of apoptosis 2 (498 aa).

BIR repeat units follow at residues 12–77 (RLAT…SMVL), 116–180 (RLVT…PRVQ), and 215–280 (RLRT…QFVL). 4 residues coordinate Zn(2+): cysteine 249, cysteine 252, histidine 269, and cysteine 276. The RING-type zinc-finger motif lies at 451 to 486 (CKVCLDEEVGVVFLPCGHLATCNQCAPSVANCPMCR).

It belongs to the IAP family. Interacts with the caspase Strica. Interacts (via BIR2 domain) with rpr and grim. Interacts (via the BIR2 and BIR3 domains) with hid. Interacts (via BIR3 domain) with Drice. Interacts with Dredd; likely to bind Dredd simultaneously with Fadd to form a trimeric complex. In terms of processing, caspase-dependent cleavage is required for suppression of Drice-mediated cell death. As to expression, expressed in both principal and stellar cells of the Malphigian tubules.

It is found in the nucleus. The protein localises to the cytoplasm. Required for activation of NF-kappaB transcription factors in the immune deficiency (Imd) signaling cascade which is essential for innate immune responses upon infection by Gram-negative bacteria. Promotes cytoplasmic cleavage of Rel and its translocation to the nucleus where it drives expression of antimicrobial peptides. Binds, polyubiquitinates and activates Dredd which is required for Rel-mediated induction of antimicrobial peptides. Anti-apoptotic protein which binds, ubiquitinates and inactivates the effector caspase Drice. Suppresses rpr and hid-dependent cell death in the eye. However, has also been shown to have little, if any, role in the regulation of the canonical caspase-dependent apoptosis pathway. Plays a role in regulating the expression of ion channels. The polypeptide is Death-associated inhibitor of apoptosis 2 (Diap2) (Drosophila melanogaster (Fruit fly)).